Reading from the N-terminus, the 405-residue chain is MAAFEYLALDPSGRQQKGVLEADSARQVRQLLRERQLAPLDVKPTRTREQSGQGGRLTFARGLSARDLALVTRQLATLVQAALPIEEALRAAAAQSTSQRIQSMLLAVRAKVLEGHSLAGSLREFPTAFPELYRATVAAGEHAGHLGPVLEQLADYTEQRQQSRQKIQLALLYPVILMVASLAIVGFLLGYVVPDVVRVFIDSGQTLPLLTRVLIGVSDWVKAWGALAFVAAIGGVIGFRYALRKDAFRERWHGFLLRVPLVGRLVRSTDTARFASTLAILTRSGVPLVEALAIAAEVIANRIIRNEVVKAAQKVREGASLTRSLEATGQFPPMMLHMIASGERSGELDQMLARTARNQENDLAAQIGLMVGLFEPFMLIFMGAVVLVIVLAILLPILSLNQLVG.

Residues 1-168 lie on the Cytoplasmic side of the membrane; it reads MAAFEYLALD…QRQQSRQKIQ (168 aa). Residues Thr97, Glu151, and Asp155 each coordinate Ca(2+). The helical transmembrane segment at 169-189 threads the bilayer; the sequence is LALLYPVILMVASLAIVGFLL. The Periplasmic portion of the chain corresponds to 190 to 219; the sequence is GYVVPDVVRVFIDSGQTLPLLTRVLIGVSD. Residues 220-239 traverse the membrane as a helical segment; that stretch reads WVKAWGALAFVAAIGGVIGF. The Cytoplasmic segment spans residues 240–376; that stretch reads RYALRKDAFR…IGLMVGLFEP (137 aa). The chain crosses the membrane as a helical span at residues 377-397; that stretch reads FMLIFMGAVVLVIVLAILLPI. The Periplasmic portion of the chain corresponds to 398 to 405; sequence LSLNQLVG.

This sequence belongs to the GSP F family. In terms of assembly, type II secretion system is composed of four main components: the outer membrane complex, the inner membrane complex, the cytoplasmic secretion ATPase and the periplasm-spanning pseudopilus. Homodimer. Interacts with XcpR/GspE and XcpY/GspL components.

It is found in the cell inner membrane. Its function is as follows. Component of the type II secretion system inner membrane complex required for the energy-dependent secretion of extracellular factors such as proteases and toxins from the periplasm. This is Type II secretion system protein F (xcpS) from Pseudomonas aeruginosa (strain ATCC 15692 / DSM 22644 / CIP 104116 / JCM 14847 / LMG 12228 / 1C / PRS 101 / PAO1).